Here is a 148-residue protein sequence, read N- to C-terminus: Deoxyuridine 5'-triphosphate nucleotidohydrolase (148 aa).

Substrate is bound by residues 67 to 69 (RSG), Asn80, 84 to 86 (LID), and Met94.

The protein belongs to the dUTPase family. Requires Mg(2+) as cofactor.

The catalysed reaction is dUTP + H2O = dUMP + diphosphate + H(+). Its pathway is pyrimidine metabolism; dUMP biosynthesis; dUMP from dCTP (dUTP route): step 2/2. In terms of biological role, this enzyme is involved in nucleotide metabolism: it produces dUMP, the immediate precursor of thymidine nucleotides and it decreases the intracellular concentration of dUTP so that uracil cannot be incorporated into DNA. The polypeptide is Deoxyuridine 5'-triphosphate nucleotidohydrolase (Ralstonia pickettii (strain 12J)).